The chain runs to 83 residues: Small ribosomal subunit protein bS16 (83 aa).

The protein belongs to the bacterial ribosomal protein bS16 family.

This Pseudomonas fluorescens (strain Pf0-1) protein is Small ribosomal subunit protein bS16.